We begin with the raw amino-acid sequence, 631 residues long: 1-deoxy-D-xylulose-5-phosphate synthase (631 aa).

Residues H74 and 115-117 each bind thiamine diphosphate; that span reads GHS. D146 provides a ligand contact to Mg(2+). Residues 147–148, N175, Y286, and E368 each bind thiamine diphosphate; that span reads GA. A Mg(2+)-binding site is contributed by N175.

It belongs to the transketolase family. DXPS subfamily. As to quaternary structure, homodimer. The cofactor is Mg(2+). Requires thiamine diphosphate as cofactor.

It carries out the reaction D-glyceraldehyde 3-phosphate + pyruvate + H(+) = 1-deoxy-D-xylulose 5-phosphate + CO2. It participates in metabolic intermediate biosynthesis; 1-deoxy-D-xylulose 5-phosphate biosynthesis; 1-deoxy-D-xylulose 5-phosphate from D-glyceraldehyde 3-phosphate and pyruvate: step 1/1. Its function is as follows. Catalyzes the acyloin condensation reaction between C atoms 2 and 3 of pyruvate and glyceraldehyde 3-phosphate to yield 1-deoxy-D-xylulose-5-phosphate (DXP). This chain is 1-deoxy-D-xylulose-5-phosphate synthase, found in Natranaerobius thermophilus (strain ATCC BAA-1301 / DSM 18059 / JW/NM-WN-LF).